We begin with the raw amino-acid sequence, 482 residues long: Cysteine--tRNA ligase (482 aa).

Cysteine 29 provides a ligand contact to Zn(2+). The 'HIGH' region motif lies at 31–41; it reads VTVYDYCHLGH. The Zn(2+) site is built by cysteine 213, histidine 238, and glutamate 242. A 'KMSKS' region motif is present at residues 275–279; sequence KMSKS. Lysine 278 serves as a coordination point for ATP.

This sequence belongs to the class-I aminoacyl-tRNA synthetase family. In terms of assembly, monomer. Requires Zn(2+) as cofactor.

The protein resides in the cytoplasm. The catalysed reaction is tRNA(Cys) + L-cysteine + ATP = L-cysteinyl-tRNA(Cys) + AMP + diphosphate. The sequence is that of Cysteine--tRNA ligase from Gloeobacter violaceus (strain ATCC 29082 / PCC 7421).